The sequence spans 471 residues: Tryptophanase (471 aa).

3 positions are modified to N6-acetyllysine: lysine 5, lysine 115, and lysine 156. Lysine 270 bears the N6-(pyridoxal phosphate)lysine mark. N6-acetyllysine is present on lysine 450.

This sequence belongs to the beta-eliminating lyase family. As to quaternary structure, homotetramer. The cofactor is pyridoxal 5'-phosphate.

It catalyses the reaction L-tryptophan + H2O = indole + pyruvate + NH4(+). The protein operates within amino-acid degradation; L-tryptophan degradation via pyruvate pathway; indole and pyruvate from L-tryptophan: step 1/1. This chain is Tryptophanase, found in Escherichia coli O139:H28 (strain E24377A / ETEC).